The chain runs to 601 residues: 3-hydroxy-3-methylglutaryl-coenzyme A reductase (601 aa).

The disordered stretch occupies residues 1 to 34 (MDSRRRSPTVTAKAAAGELPLAPHEGQNQQPSIP). 2 helical membrane passes run 36-58 (SSDV…FFSV) and 86-106 (ALAS…LDFV). Residues 107–179 (QSLIYKPNNE…PLITPQNSEE (73 aa)) are linker. The tract at residues 180 to 601 (DEDIIKAVVA…IASSQLESDS (422 aa)) is catalytic. The active-site Charge relay system is the Glu-273. A glycan (N-linked (GlcNAc...) asparagine) is linked at Asn-337. Catalysis depends on charge relay system residues Lys-405 and Asp-481. His-579 (proton donor) is an active-site residue. A glycan (N-linked (GlcNAc...) asparagine) is linked at Asn-583.

The protein belongs to the HMG-CoA reductase family.

It localises to the endoplasmic reticulum membrane. The catalysed reaction is (R)-mevalonate + 2 NADP(+) + CoA = (3S)-3-hydroxy-3-methylglutaryl-CoA + 2 NADPH + 2 H(+). It functions in the pathway metabolic intermediate biosynthesis; (R)-mevalonate biosynthesis; (R)-mevalonate from acetyl-CoA: step 3/3. Catalyzes the synthesis of mevalonate. The specific precursor of all isoprenoid compounds present in plants. The sequence is that of 3-hydroxy-3-methylglutaryl-coenzyme A reductase (HMGR) from Catharanthus roseus (Madagascar periwinkle).